The chain runs to 379 residues: Cytochrome b (379 aa).

The next 8 membrane-spanning stretches (helical) occupy residues 33–53, 77–98, 113–133, 178–198, 226–246, 288–308, 320–340, and 347–367; these read FGSLLGLCLLIQILTGLFLAM, WLIRYMHANGASMFFICLFLHV, WNIGVILLFAVMATAFMGYVL, FFAFHFILPFIVAALVMVHLL, IKDVLGVLLLLLLFMMLVLFS, LGGVLALVFSILILMLFPILH, LSQCLFWILVADLFTLTWIGG, and FITIGQVASILYFTIILLALP. H83 and H97 together coordinate heme b. The heme b site is built by H182 and H196.

The protein belongs to the cytochrome b family. As to quaternary structure, the cytochrome bc1 complex contains 11 subunits: 3 respiratory subunits (MT-CYB, CYC1 and UQCRFS1), 2 core proteins (UQCRC1 and UQCRC2) and 6 low-molecular weight proteins (UQCRH/QCR6, UQCRB/QCR7, UQCRQ/QCR8, UQCR10/QCR9, UQCR11/QCR10 and a cleavage product of UQCRFS1). This cytochrome bc1 complex then forms a dimer. Heme b is required as a cofactor.

Its subcellular location is the mitochondrion inner membrane. Functionally, component of the ubiquinol-cytochrome c reductase complex (complex III or cytochrome b-c1 complex) that is part of the mitochondrial respiratory chain. The b-c1 complex mediates electron transfer from ubiquinol to cytochrome c. Contributes to the generation of a proton gradient across the mitochondrial membrane that is then used for ATP synthesis. The polypeptide is Cytochrome b (MT-CYB) (Sciurus niger (Eastern fox squirrel)).